Here is a 255-residue protein sequence, read N- to C-terminus: uncharacterized protein (255 aa).

The first 23 residues, methionine 1 to glycine 23, serve as a signal peptide directing secretion. A lipid anchor (N-palmitoyl cysteine) is attached at cysteine 24. The S-diacylglycerol cysteine moiety is linked to residue cysteine 24.

Belongs to the staphylococcal tandem lipoprotein family.

It is found in the cell membrane. This is an uncharacterized protein from Staphylococcus aureus (strain N315).